Here is a 283-residue protein sequence, read N- to C-terminus: uncharacterized protein (283 aa).

The 99-residue stretch at 172–270 (EAIRDYIDER…ERSPSEYRRQ (99 aa)) folds into the HTH araC/xylS-type domain. DNA-binding regions (H-T-H motif) lie at residues 189–210 (ESVA…QKTG) and 237–260 (VKEV…RKNT).

This is an uncharacterized protein from Escherichia coli (strain K12).